A 1358-amino-acid chain; its full sequence is DNA mismatch repair protein Msh6 (1358 aa).

The tract at residues 1-87 (MSRQSTLYSF…SSAQAVPPSS (87 aa)) is disordered. A phosphoserine mark is found at Ser-14, Ser-38, and Ser-40. A compositionally biased stretch (low complexity) spans 25–46 (AEASRQGAAASGASASRGGDAA). Residue Lys-67 is modified to N6-acetyllysine. The segment covering 76 to 87 (ASSSAQAVPPSS) has biased composition (low complexity). 5 positions are modified to phosphoserine: Ser-91, Ser-137, Ser-200, Ser-219, and Ser-227. In terms of domain architecture, PWWP spans 92 to 154 (PGDLVWAKME…KRMLKPYTGS (63 aa)). The segment at 197–360 (DEPSEPEEEE…VSGGGNDSSG (164 aa)) is disordered. Acidic residues-rich tracts occupy residues 198–209 (EPSEPEEEEETE) and 219–231 (SEEDNYNESEEEA). The segment covering 240–249 (RSSRQVKKRR) has biased composition (basic residues). Residues Ser-252, Ser-254, Ser-256, and Ser-261 each carry the phosphoserine modification. The segment covering 263 to 273 (VEFKPDTKQEG) has biased composition (basic and acidic residues). Thr-269 is subject to Phosphothreonine. 4 positions are modified to phosphoserine: Ser-274, Ser-275, Ser-279, and Ser-280. Positions 329–351 (LSETKSTLSAFSAPQNSESQTHV) are enriched in polar residues. Thr-487 is modified (phosphothreonine). Lys-503 carries the N6-acetyllysine modification. A phosphoserine mark is found at Ser-827 and Ser-932. Thr-1007 is subject to Phosphothreonine. Position 1132–1139 (1132–1139 (GPNMGGKS)) interacts with ATP.

The protein belongs to the DNA mismatch repair MutS family. Component of the DNA mismatch repair (MMR) complex composed at least of MSH2, MSH3, MSH6, PMS1 and MLH1. Heterodimer consisting of MSH2-MSH6 (MutS alpha). Forms a ternary complex with MutL alpha (MLH1-PMS1). Interacts with MCM9. Part of the BRCA1-associated genome surveillance complex (BASC), which contains BRCA1, MSH2, MSH6, MLH1, ATM, BLM, PMS2 and the RAD50-MRE11-NBS1 protein complex. This association could be a dynamic process changing throughout the cell cycle and within subnuclear domains. Post-translationally, phosphorylated by PRKCZ, which may prevent MutS alpha degradation by the ubiquitin-proteasome pathway.

The protein localises to the nucleus. The protein resides in the chromosome. Its function is as follows. Component of the post-replicative DNA mismatch repair system (MMR). Heterodimerizes with MSH2 to form MutS alpha, which binds to DNA mismatches thereby initiating DNA repair. When bound, MutS alpha bends the DNA helix and shields approximately 20 base pairs, and recognizes single base mismatches and dinucleotide insertion-deletion loops (IDL) in the DNA. After mismatch binding, forms a ternary complex with the MutL alpha heterodimer, which is thought to be responsible for directing the downstream MMR events, including strand discrimination, excision, and resynthesis. ATP binding and hydrolysis play a pivotal role in mismatch repair functions. The ATPase activity associated with MutS alpha regulates binding similar to a molecular switch: mismatched DNA provokes ADP--&gt;ATP exchange, resulting in a discernible conformational transition that converts MutS alpha into a sliding clamp capable of hydrolysis-independent diffusion along the DNA backbone. This transition is crucial for mismatch repair. MutS alpha may also play a role in DNA homologous recombination repair. Recruited on chromatin in G1 and early S phase via its PWWP domain that specifically binds trimethylated 'Lys-36' of histone H3 (H3K36me3): early recruitment to chromatin to be replicated allowing a quick identification of mismatch repair to initiate the DNA mismatch repair reaction. This is DNA mismatch repair protein Msh6 from Mus musculus (Mouse).